Here is a 510-residue protein sequence, read N- to C-terminus: Histidine ammonia-lyase (510 aa).

The segment at residues 143 to 145 (ASG) is a cross-link (5-imidazolinone (Ala-Gly)). The residue at position 144 (S144) is a 2,3-didehydroalanine (Ser).

The protein belongs to the PAL/histidase family. In terms of processing, contains an active site 4-methylidene-imidazol-5-one (MIO), which is formed autocatalytically by cyclization and dehydration of residues Ala-Ser-Gly.

The protein resides in the cytoplasm. It carries out the reaction L-histidine = trans-urocanate + NH4(+). It functions in the pathway amino-acid degradation; L-histidine degradation into L-glutamate; N-formimidoyl-L-glutamate from L-histidine: step 1/3. In Photobacterium profundum (strain SS9), this protein is Histidine ammonia-lyase.